A 291-amino-acid polypeptide reads, in one-letter code: GTPase Era (291 aa).

The region spanning 2 to 167 (KSGFVSIIGR…LDEIVKYLDE (166 aa)) is the Era-type G domain. A G1 region spans residues 10–17 (GRTNAGKS). Residue 10 to 17 (GRTNAGKS) participates in GTP binding. The segment at 36–40 (NATRR) is G2. The segment at 57–60 (DTPG) is G3. GTP contacts are provided by residues 57 to 61 (DTPGL) and 116 to 119 (NKVD). The interval 116 to 119 (NKVD) is G4. The segment at 146–148 (YSS) is G5. In terms of domain architecture, KH type-2 spans 186–274 (YRDFILESIY…LLKLFVTVKK (89 aa)).

The protein belongs to the TRAFAC class TrmE-Era-EngA-EngB-Septin-like GTPase superfamily. Era GTPase family. As to quaternary structure, monomer.

The protein localises to the cytoplasm. It is found in the cell inner membrane. An essential GTPase that binds both GDP and GTP, with rapid nucleotide exchange. Plays a role in 16S rRNA processing and 30S ribosomal subunit biogenesis and possibly also in cell cycle regulation and energy metabolism. This Campylobacter jejuni subsp. jejuni serotype O:23/36 (strain 81-176) protein is GTPase Era.